The primary structure comprises 281 residues: Cis-2,3-dihydrobiphenyl-2,3-diol dehydrogenase (281 aa).

Residue 10–34 (ITGGASGLGRALVDRFVAEGARVAV) participates in NAD(+) binding. S142 contributes to the substrate binding site. The active-site Proton acceptor is the Y155.

Belongs to the short-chain dehydrogenases/reductases (SDR) family. Homotetramer.

The catalysed reaction is (2R,3S)-3-phenylcyclohexa-3,5-diene-1,2-diol + NAD(+) = biphenyl-2,3-diol + NADH + H(+). The protein operates within xenobiotic degradation; biphenyl degradation; 2-hydroxy-2,4-pentadienoate and benzoate from biphenyl: step 2/4. The chain is Cis-2,3-dihydrobiphenyl-2,3-diol dehydrogenase (bphB) from Comamonas testosteroni (Pseudomonas testosteroni).